We begin with the raw amino-acid sequence, 221 residues long: Ras-related protein Rab-28 (221 aa).

At Ser2 the chain carries N-acetylserine. Residue Ser8 is modified to Phosphoserine. Residues Gly21, Gly24, Lys25, Thr26, Ser27, Gly38, Lys39, Tyr41, and Thr44 each contribute to the GTP site. Residue Thr26 participates in Mg(2+) binding. Positions Glu35–Phe49 are switch I. Positions 44 and 68 each coordinate Mg(2+). Residues Asp68–Gly85 form a switch II region. GTP contacts are provided by Gly71, Asn129, Lys130, Asp132, Ala160, and Lys161. Cys218 carries the post-translational modification Cysteine methyl ester. Cys218 carries S-farnesyl cysteine lipidation. Positions Ala219 to Gln221 are cleaved as a propeptide — removed in mature form.

The protein belongs to the small GTPase superfamily. Rab family. Interacts (prenylated form) with PDE6D; the interaction promotes RAB28 delivery to the photoreceptor outer segments. Interacts with KCNJ13; the interaction may facilitate cone outer segments phagocytosis. Also participates in nuclear factor kappa-B p65/RELA nuclear transport in endothelial cells. It depends on Mg(2+) as a cofactor. Isoprenylated.

The protein localises to the cell membrane. It localises to the cytoplasm. It is found in the cytoskeleton. Its subcellular location is the cilium basal body. The protein resides in the nucleus. It carries out the reaction GTP + H2O = GDP + phosphate + H(+). With respect to regulation, regulated by guanine nucleotide exchange factors (GEFs) which promote the exchange of bound GDP for free GTP. Regulated by GTPase activating proteins (GAPs) which increase the GTP hydrolysis activity. Inhibited by GDP dissociation inhibitors (GDIs). The small GTPases Rab are key regulators of intracellular membrane trafficking, from the formation of transport vesicles to their fusion with membranes. Rabs cycle between an inactive GDP-bound form and an active GTP-bound form that is able to recruit to membranes different sets of downstream effectors directly responsible for vesicle formation, movement, tethering and fusion. RAB28 is required for shedding and phagocytosis of cone cell outer segments (OS) discs in the retina. Also participates in nuclear factor kappa-B p65/RELA nuclear transport in endothelial cells. The polypeptide is Ras-related protein Rab-28 (RAB28) (Pongo abelii (Sumatran orangutan)).